Reading from the N-terminus, the 558-residue chain is DALR anticodon-binding domain-containing protein 3 (558 aa).

Residues K213–E240 form a disordered region.

The chain is DALR anticodon-binding domain-containing protein 3 (dalrd3) from Danio rerio (Zebrafish).